Consider the following 319-residue polypeptide: 4-diphosphocytidyl-2-C-methyl-D-erythritol kinase (319 aa).

Lys18 is an active-site residue. An ATP-binding site is contributed by 103 to 113; the sequence is PIGAGLAGGST. Residue Asp145 is part of the active site.

The protein belongs to the GHMP kinase family. IspE subfamily.

The enzyme catalyses 4-CDP-2-C-methyl-D-erythritol + ATP = 4-CDP-2-C-methyl-D-erythritol 2-phosphate + ADP + H(+). It participates in isoprenoid biosynthesis; isopentenyl diphosphate biosynthesis via DXP pathway; isopentenyl diphosphate from 1-deoxy-D-xylulose 5-phosphate: step 3/6. Its function is as follows. Catalyzes the phosphorylation of the position 2 hydroxy group of 4-diphosphocytidyl-2C-methyl-D-erythritol. In Prochlorococcus marinus (strain NATL2A), this protein is 4-diphosphocytidyl-2-C-methyl-D-erythritol kinase.